Here is a 321-residue protein sequence, read N- to C-terminus: F420-non-reducing hydrogenase iron-sulfur subunit G (321 aa).

Belongs to the [NiFe]/[NiFeSe] hydrogenase small subunit family. The F420-non-reducing hydrogenase is composed of three subunits; MvhA, MvhD and MvhG. It forms a complex with the heterodisulfide reductase (Hdr).

Its subcellular location is the cytoplasm. Its function is as follows. Part of a complex that provides reducing equivalents for heterodisulfide reductase. The chain is F420-non-reducing hydrogenase iron-sulfur subunit G (mvhG) from Archaeoglobus profundus (strain DSM 5631 / JCM 9629 / NBRC 100127 / Av18).